Consider the following 292-residue polypeptide: Formamidopyrimidine-DNA glycosylase (292 aa).

P2 (schiff-base intermediate with DNA) is an active-site residue. Catalysis depends on E3, which acts as the Proton donor. Residue K58 is the Proton donor; for beta-elimination activity of the active site. DNA is bound by residues H103, R122, and K165. An FPG-type zinc finger spans residues 256–292; it reads RVYDRALHPCPTPGCKGEISRITQGGRSSFFCSMCQK. The Proton donor; for delta-elimination activity role is filled by R282.

Belongs to the FPG family. In terms of assembly, monomer. Requires Zn(2+) as cofactor.

The enzyme catalyses Hydrolysis of DNA containing ring-opened 7-methylguanine residues, releasing 2,6-diamino-4-hydroxy-5-(N-methyl)formamidopyrimidine.. It carries out the reaction 2'-deoxyribonucleotide-(2'-deoxyribose 5'-phosphate)-2'-deoxyribonucleotide-DNA = a 3'-end 2'-deoxyribonucleotide-(2,3-dehydro-2,3-deoxyribose 5'-phosphate)-DNA + a 5'-end 5'-phospho-2'-deoxyribonucleoside-DNA + H(+). Its function is as follows. Involved in base excision repair of DNA damaged by oxidation or by mutagenic agents. Acts as a DNA glycosylase that recognizes and removes damaged bases. Has a preference for oxidized purines, such as 7,8-dihydro-8-oxoguanine (8-oxoG). Has AP (apurinic/apyrimidinic) lyase activity and introduces nicks in the DNA strand. Cleaves the DNA backbone by beta-delta elimination to generate a single-strand break at the site of the removed base with both 3'- and 5'-phosphates. This chain is Formamidopyrimidine-DNA glycosylase, found in Methylocella silvestris (strain DSM 15510 / CIP 108128 / LMG 27833 / NCIMB 13906 / BL2).